Consider the following 246-residue polypeptide: DNA polymerase sliding clamp (246 aa).

This sequence belongs to the PCNA family. In terms of assembly, homotrimer. The subunits circularize to form a toroid; DNA passes through its center. Replication factor C (RFC) is required to load the toroid on the DNA.

Functionally, sliding clamp subunit that acts as a moving platform for DNA processing. Responsible for tethering the catalytic subunit of DNA polymerase and other proteins to DNA during high-speed replication. The polypeptide is DNA polymerase sliding clamp (Thermoplasma acidophilum (strain ATCC 25905 / DSM 1728 / JCM 9062 / NBRC 15155 / AMRC-C165)).